The chain runs to 354 residues: Replication-associated protein (354 aa).

One can recognise a CRESS-DNA virus Rep endonuclease domain in the interval 11–114; the sequence is LHRNANTFLT…PLAVFERGTF (104 aa). The short motif at 18 to 21 is the RCR-1 element; the sequence is FLTY. The a divalent metal cation site is built by Glu-52, His-60, and His-62. Residues 60-62 carry the RCR-2 motif; the sequence is HLH. Tyr-100 (for DNA cleavage activity) is an active-site residue. Residues 100-103 carry the RCR-3 motif; that stretch reads YILK. Glu-104 provides a ligand contact to a divalent metal cation. The segment at 174-186 is oligomerization; it reads SANKLFPDIQEEF. 228-235 contacts ATP; sequence GPTRTGKS. Residues 251–269 are transactivation; that stretch reads VDWSSYNEDAIYNIVDDIP. The Nuclear localization signal signature appears at 291 to 302; the sequence is KYGKKKKVQMKS.

The protein belongs to the geminiviridae Rep protein family. As to quaternary structure, homooligomer. Rep binds to repeated DNA motifs (iterons). Forms the O-complex, which is a Rep-DNA complex involved in the initiation of RCR. Part of the C- and V-complexes which are RepA-Rep-DNA complexes involved in the c-sense and v-sense transcription. The cofactor is Mg(2+). Mn(2+) is required as a cofactor.

It is found in the host nucleus. Functionally, essential for the replication of viral ssDNA. The closed circular ssDNA genome is first converted to a superhelical dsDNA. Rep binds a specific region at the genome origin of replication. It introduces an endonucleolytic nick within the conserved sequence 5'-TAATATTAC-3' in the intergenic region of the genome present in all geminiviruses, thereby initiating the rolling circle replication (RCR). Following cleavage, binds covalently to the 5'-phosphate of DNA as a tyrosyl ester. The cleavage gives rise to a free 3'-OH that serves as a primer for the cellular DNA polymerase. The polymerase synthesizes the (+) strand DNA by rolling circle mechanism. After one round of replication, a Rep-catalyzed nucleotidyl transfer reaction releases a circular single-stranded virus genome, thereby terminating the replication. Displays origin-specific DNA cleavage, nucleotidyl transferase, ATPase and helicase activities. Acts as an inhibitor of C-sense gene transcription. This Avena sativa (Oat) protein is Replication-associated protein.